A 234-amino-acid polypeptide reads, in one-letter code: 7-carboxy-7-deazaguanine synthase (234 aa).

Substrate is bound by residues 36–38 (IQG) and Arg51. The region spanning 42 to 234 (FVGYPSIFIR…LQTHKFLGIE (193 aa)) is the Radical SAM core domain. Residues Cys55, Cys59, and Cys62 each contribute to the [4Fe-4S] cluster site. Thr64 lines the Mg(2+) pocket. Thr100 is a substrate binding site. S-adenosyl-L-methionine contacts are provided by residues Gly102, 144–146 (SPK), and 195–198 (QSMD).

Belongs to the radical SAM superfamily. 7-carboxy-7-deazaguanine synthase family. As to quaternary structure, homodimer. It depends on [4Fe-4S] cluster as a cofactor. S-adenosyl-L-methionine is required as a cofactor. Requires Mg(2+) as cofactor.

It carries out the reaction 6-carboxy-5,6,7,8-tetrahydropterin + H(+) = 7-carboxy-7-deazaguanine + NH4(+). It functions in the pathway purine metabolism; 7-cyano-7-deazaguanine biosynthesis. Functionally, catalyzes the complex heterocyclic radical-mediated conversion of 6-carboxy-5,6,7,8-tetrahydropterin (CPH4) to 7-carboxy-7-deazaguanine (CDG), a step common to the biosynthetic pathways of all 7-deazapurine-containing compounds. The sequence is that of 7-carboxy-7-deazaguanine synthase from Rickettsia prowazekii (strain Madrid E).